The following is a 547-amino-acid chain: Inositol 1,4,5-trisphosphate receptor-interacting protein-like 1 (547 aa).

An N-terminal signal peptide occupies residues 1-22 (MAVISLMFLAVMYVVHHPLMVS). Residues 23–96 (DRMDLDTLAR…PFQAGGQDGG (74 aa)) lie on the Extracellular side of the membrane. Positions 28–66 (DTLARSRQLEKRMSEEMRQLEMEFEERSRAAEQKQKVEN) form a coiled coil. A helical membrane pass occupies residues 97–117 (PLGWILGNLWNAGLFCLFLIF). The Cytoplasmic portion of the chain corresponds to 118-547 (ELLRQSMQHE…LPCSPVAGGL (430 aa)).

Belongs to the ITPRIP family.

The protein resides in the cell membrane. Its function is as follows. Functions as a ligand of CD3E, inhibiting TCR-CD3 complex signaling to regulate T cell activation. Induces stable CD3E-NCK1 binding, thereby preventing the CD3E-ZAP70 interaction and subsequently inhibiting the activation of the downstream ERK-NFkB signaling cascade and calcium influx. The chain is Inositol 1,4,5-trisphosphate receptor-interacting protein-like 1 (Itpripl1) from Mus musculus (Mouse).